A 792-amino-acid polypeptide reads, in one-letter code: Oxidoreductase cns1 (792 aa).

Interacts with cns2.

It localises to the lipid droplet. The protein operates within secondary metabolite biosynthesis. In terms of biological role, oxidoreductase; part of the gene cluster that mediates the biosynthesis of cordycepin (COR) and pentostatin (PTN), two adenosine analogs with related bioactivity profiles as both mimic adenosine and can inhibit some of the processes that are adenosine dependent. Within the pathway, cns1 catalyzes the last step by converting the cns2 product 2'-carbonyl-3'-deoxyadenosine (2'-C-3'-dA) into cordycepin (3'-deoxyadenosine). The first step of cordycepin biosynthesis involves hydroxyl phosphorylation of the 3'-OH position on adenosine to produce adenosine-3'-monophosphate (3'-AMP), catalyzed by kinase activity of cns3. Next, 3'-AMP is dephosphorylated to 2'-carbonyl-3'-deoxyadenosine by cns2, which is finally converted to cordycepin by the oxidoreductase cns1. Pentostatin production is mediated by the ATP phosphoribosyltransferase activity of cns3 on adenosine to inhibit the activity of adenosine deaminase (ADA) to prevent COR deamination to 3'-deoxyinosine (3'-dI). This is Oxidoreductase cns1 from Cordyceps militaris (strain CM01) (Caterpillar fungus).